The primary structure comprises 284 residues: Homoserine O-acetyltransferase 2 (284 aa).

The active-site Acyl-thioester intermediate is the Cys-133. Lys-154 and Ser-178 together coordinate substrate. Residue His-220 is the Proton acceptor of the active site. Glu-222 is a catalytic residue. Arg-234 contacts substrate.

This sequence belongs to the MetA family.

The protein resides in the cytoplasm. It carries out the reaction L-homoserine + acetyl-CoA = O-acetyl-L-homoserine + CoA. The protein operates within amino-acid biosynthesis; L-methionine biosynthesis via de novo pathway; O-acetyl-L-homoserine from L-homoserine: step 1/1. Transfers an acetyl group from acetyl-CoA to L-homoserine, forming acetyl-L-homoserine. This chain is Homoserine O-acetyltransferase 2, found in Ilyobacter polytropus (strain ATCC 51220 / DSM 2926 / LMG 16218 / CuHBu1).